A 120-amino-acid chain; its full sequence is Glycine cleavage system H protein (120 aa).

A Lipoyl-binding domain is found at 17–99; it reads VATVGITTYA…QGAGWFFKLK (83 aa). Residue Lys-58 is modified to N6-lipoyllysine.

Belongs to the GcvH family. In terms of assembly, the glycine cleavage system is composed of four proteins: P, T, L and H. The cofactor is (R)-lipoate.

The glycine cleavage system catalyzes the degradation of glycine. The H protein shuttles the methylamine group of glycine from the P protein to the T protein. The protein is Glycine cleavage system H protein of Rhizobium etli (strain CIAT 652).